Reading from the N-terminus, the 391-residue chain is tRNA (cytosine(38)-C(5))-methyltransferase (391 aa).

The SAM-dependent MTase C5-type domain maps to 4–391 (LRVLELYSGV…VAKLIKILYE (388 aa)). Residues 13–15 (VGG), Asp-34, 57–58 (IE), and Ser-76 each bind S-adenosyl-L-methionine. Residue Cys-79 is part of the active site. An S-adenosyl-L-methionine-binding site is contributed by Ser-376.

The protein belongs to the class I-like SAM-binding methyltransferase superfamily. C5-methyltransferase family. As to expression, ubiquitous. Higher expression in testis, ovary and thymus and at much lower levels in spleen, prostate, colon, small intestine, and peripheral blood leukocytes.

It localises to the cytoplasm. It carries out the reaction cytidine(38) in tRNA + S-adenosyl-L-methionine = 5-methylcytidine(38) in tRNA + S-adenosyl-L-homocysteine + H(+). In terms of biological role, specifically methylates cytosine 38 in the anticodon loop of tRNA(Asp). Has higher activity on tRNA(Asp) modified with queuosine at position 34. The sequence is that of tRNA (cytosine(38)-C(5))-methyltransferase (TRDMT1) from Homo sapiens (Human).